A 225-amino-acid chain; its full sequence is MNGIRDVVREEQPRERLLLEGAGSLSNRELLAVLLRTGSKEETVLKLSDKILHQFDGLRMLKDATLEELISIHGIGISKASQLMAAFELGRRMVRLEYQNRYSIRSPEDCAKYMMEEMRFLQQEHFVCLYLNTKNQVLHRQTIFIGSLNTSIVHPREVFKEAFRRAAASIICLHNHPSGDPTPSREDIEVTKRLVECGQIIGIEVLDHIIIGDHKFVSLKEKGHI.

Positions 103–225 (SIRSPEDCAK…FVSLKEKGHI (123 aa)) constitute an MPN domain. The Zn(2+) site is built by histidine 174, histidine 176, and aspartate 187. The JAMM motif signature appears at 174–187 (HNHPSGDPTPSRED).

It belongs to the UPF0758 family.

This is UPF0758 protein BCG9842_B0662 from Bacillus cereus (strain G9842).